Consider the following 538-residue polypeptide: CWF19-like protein 1 (538 aa).

The disordered stretch occupies residues 298–324 (QGRKRSSTGRDSKSSPHPKQPRKPPQP).

This sequence belongs to the CWF19 family. As to expression, expressed in many brain regions, including cerebellum, thalamus and occipital, parietal and temporal lobes (at protein level). Also expressed in the spinal cord (at protein level).

This chain is CWF19-like protein 1 (CWF19L1), found in Homo sapiens (Human).